We begin with the raw amino-acid sequence, 298 residues long: ATP phosphoribosyltransferase (298 aa).

The protein belongs to the ATP phosphoribosyltransferase family. Long subfamily. Mg(2+) is required as a cofactor.

It localises to the cytoplasm. The catalysed reaction is 1-(5-phospho-beta-D-ribosyl)-ATP + diphosphate = 5-phospho-alpha-D-ribose 1-diphosphate + ATP. It participates in amino-acid biosynthesis; L-histidine biosynthesis; L-histidine from 5-phospho-alpha-D-ribose 1-diphosphate: step 1/9. Its activity is regulated as follows. Feedback inhibited by histidine. In terms of biological role, catalyzes the condensation of ATP and 5-phosphoribose 1-diphosphate to form N'-(5'-phosphoribosyl)-ATP (PR-ATP). Has a crucial role in the pathway because the rate of histidine biosynthesis seems to be controlled primarily by regulation of HisG enzymatic activity. This chain is ATP phosphoribosyltransferase, found in Psychromonas ingrahamii (strain DSM 17664 / CCUG 51855 / 37).